We begin with the raw amino-acid sequence, 458 residues long: Hyaluronidase conohyal-P1 (458 aa).

An N-terminal signal peptide occupies residues 1-18 (MRVVVVVTGLVVVVVATA). Residues 24–47 (HDVKSASSPLSSSSVYQGSSGDDC) form a disordered region. Over residues 28–43 (SASSPLSSSSVYQGSS) the composition is skewed to low complexity. C68 and C342 are joined by a disulfide. N106 and N141 each carry an N-linked (GlcNAc...) asparagine glycan. E151 serves as the catalytic Proton donor. N261, N337, and N359 each carry an N-linked (GlcNAc...) asparagine glycan. One can recognise an EGF-like domain in the interval 363–434 (VMADCSTTLC…VRPSRCHKQQ (72 aa)). Intrachain disulfides connect C367/C378, C372/C411, and C413/C422.

The protein belongs to the glycosyl hydrolase 56 family. In terms of tissue distribution, expressed by the venom duct.

Its subcellular location is the secreted. It catalyses the reaction Random hydrolysis of (1-&gt;4)-linkages between N-acetyl-beta-D-glucosamine and D-glucuronate residues in hyaluronate.. Hyaluronidase catalyzes the hydrolysis of hyaluronic acid (HA), an anionic, nonsulfated glycosaminoglycan distributed widely throughout connective, epithelial, and neural tissues. In venom, they are known to enhance diffusion of the venom by degrading the extracellular matrix. The polypeptide is Hyaluronidase conohyal-P1 (Conus purpurascens (Purple cone)).